Here is a 148-residue protein sequence, read N- to C-terminus: CASP-like protein 1 (148 aa).

Transmembrane regions (helical) follow at residues 31-51 (FIYF…TSLL), 74-94 (VLLL…GYIG), and 121-141 (IAAG…SFFT).

The protein belongs to the Casparian strip membrane proteins (CASP) family. Homodimer and heterodimers.

It localises to the cell membrane. This Panax ginseng (Korean ginseng) protein is CASP-like protein 1.